The following is a 345-amino-acid chain: Dihydroorotate dehydrogenase (quinone) (345 aa).

Residues 65-69 (AGLDK) and Thr-89 each bind FMN. Position 69 (Lys-69) interacts with substrate. 114-118 (NRMGF) is a binding site for substrate. FMN-binding residues include Asn-146 and Asn-179. Residue Asn-179 coordinates substrate. The active-site Nucleophile is Ser-182. Substrate is bound at residue Asn-184. FMN contacts are provided by Lys-224 and Thr-252. A substrate-binding site is contributed by 253-254 (NT). FMN-binding positions include Gly-275, Gly-304, and 325–326 (YT).

Belongs to the dihydroorotate dehydrogenase family. Type 2 subfamily. Monomer. FMN serves as cofactor.

Its subcellular location is the cell membrane. The enzyme catalyses (S)-dihydroorotate + a quinone = orotate + a quinol. It participates in pyrimidine metabolism; UMP biosynthesis via de novo pathway; orotate from (S)-dihydroorotate (quinone route): step 1/1. Catalyzes the conversion of dihydroorotate to orotate with quinone as electron acceptor. This is Dihydroorotate dehydrogenase (quinone) from Janthinobacterium sp. (strain Marseille) (Minibacterium massiliensis).